The chain runs to 275 residues: 2-dehydro-3-deoxyphosphooctonate aldolase (275 aa).

This sequence belongs to the KdsA family.

The protein localises to the cytoplasm. The catalysed reaction is D-arabinose 5-phosphate + phosphoenolpyruvate + H2O = 3-deoxy-alpha-D-manno-2-octulosonate-8-phosphate + phosphate. It participates in carbohydrate biosynthesis; 3-deoxy-D-manno-octulosonate biosynthesis; 3-deoxy-D-manno-octulosonate from D-ribulose 5-phosphate: step 2/3. The protein operates within bacterial outer membrane biogenesis; lipopolysaccharide biosynthesis. The chain is 2-dehydro-3-deoxyphosphooctonate aldolase from Francisella tularensis subsp. holarctica (strain LVS).